We begin with the raw amino-acid sequence, 758 residues long: MSDTQDNAPASAQGVDQKAAAGCPVAHDSVTAHGSESESPAIDSPTPHSGGRPRTNRDWWPNQLDLSVLSTNSAKVNPLGEDFAYAKEFAKLDVEALKRDIVEVLTTSQDWWPADFGHYGGLMIRLSWHAAGTYRIDDGRGGAGDGGQRFAPLNSWPDNVNLDKARRLLWPVKQKYGQKISWADLLVLAGNVALESMGFKTFGFGFGREDVWEPEEIFWGSEDTWVGDERYVSEKEFVAGVGATEMGLIYVNPEGPRGNADPAAAAHFIRETFRRMAMDDEETVALIAGGHTFGKTHGAGIADDHVGPEPEAAPLEAQGLGWMSSYASGAGADAISSGLEVTWTDRPTQWSNRFFEILFAYEWELTTSPGGAKQWVAKDAEAIIPDAYDAAKKHKPTMLTTDLSLRVDPAYERISRRFLENPDEFALAFAKAWYKLLHRDMGPVSRFLGPWVPEPQLWQDPVPAVDHALVGDADIAALKAKVLQSGLTTAQLVSTAWASAASFRHTDRRGGANGARVRLEPQRGWEVNQPEQLATVLTTLEGIQREFNAAGGTKISLADLIVLAGSAAVEKAARDAGFEVTVPFHPGRTDATQEQTDVESFQVLEPRADGFRNYLRPGEKAQPEVLLVDRAYMLNLTAPEMTVLIGGLRALEANVGGSRHGVLTDRPGVLTNDFFTNLLALGTRWKASESTEHVYEIRDLATDTVKWTASAVDLIFGSNSQLRALAEVYASEDAREKFVTDFVAAWTKVMELDRFDLA.

A compositionally biased stretch (polar residues) spans 1 to 10 (MSDTQDNAPA). A disordered region spans residues 1-59 (MSDTQDNAPASAQGVDQKAAAGCPVAHDSVTAHGSESESPAIDSPTPHSGGRPRTNRDW). The segment at residues 128–250 (WHAAGTYRID…VGATEMGLIY (123 aa)) is a cross-link (tryptophyl-tyrosyl-methioninium (Trp-Tyr) (with M-276)). The active-site Proton acceptor is histidine 129. The tryptophyl-tyrosyl-methioninium (Tyr-Met) (with W-128) cross-link spans 250–276 (YVNPEGPRGNADPAAAAHFIRETFRRM). Histidine 291 provides a ligand contact to heme b.

It belongs to the peroxidase family. Peroxidase/catalase subfamily. In terms of assembly, homodimer or homotetramer. It depends on heme b as a cofactor. Formation of the three residue Trp-Tyr-Met cross-link is important for the catalase, but not the peroxidase activity of the enzyme.

The enzyme catalyses H2O2 + AH2 = A + 2 H2O. The catalysed reaction is 2 H2O2 = O2 + 2 H2O. In terms of biological role, bifunctional enzyme with both catalase and broad-spectrum peroxidase activity. This chain is Catalase-peroxidase, found in Salinispora arenicola (strain CNS-205).